The primary structure comprises 188 residues: Elongation factor P (188 aa).

It belongs to the elongation factor P family.

Its subcellular location is the cytoplasm. It functions in the pathway protein biosynthesis; polypeptide chain elongation. Its function is as follows. Involved in peptide bond synthesis. Stimulates efficient translation and peptide-bond synthesis on native or reconstituted 70S ribosomes in vitro. Probably functions indirectly by altering the affinity of the ribosome for aminoacyl-tRNA, thus increasing their reactivity as acceptors for peptidyl transferase. The chain is Elongation factor P (efp) from Rickettsia prowazekii (strain Madrid E).